The primary structure comprises 189 residues: Guanylate kinase (189 aa).

Residues 8 to 186 form the Guanylate kinase-like domain; that stretch reads GKLTVITGPS…AVIELESLMG (179 aa). 15–22 contributes to the ATP binding site; sequence GPSGVGKG.

It belongs to the guanylate kinase family.

The protein resides in the cytoplasm. It catalyses the reaction GMP + ATP = GDP + ADP. Essential for recycling GMP and indirectly, cGMP. This chain is Guanylate kinase, found in Prochlorococcus marinus (strain MIT 9313).